The following is a 270-amino-acid chain: MTEQYQHRARKRFGQNFLHDAGVIDRILRSIHAKPEDRMLEIGPGQGALTEGLLGSGAQLDVVELDKDLIPILNQQFAGKSNFNLHQGDALKFDFNTLGAAPGSLRVVGNLPYNISTPLIFHLLQNAGLIRDMHFMLQKEVVERLAAGPGGGDWGRLSIMVQYHCRVEHLFNVGPGAFNPPPKVDSAIVRLVPHAVLPHPAKDHRLLERIVREAFNQRRKTLRNTLKALLSSAEIEAAGVDGSLRPEQLDLAAFVRLADQLADQPKPATD.

S-adenosyl-L-methionine-binding residues include N16, L18, G43, E64, D89, and N110.

This sequence belongs to the class I-like SAM-binding methyltransferase superfamily. rRNA adenine N(6)-methyltransferase family. RsmA subfamily.

It localises to the cytoplasm. The enzyme catalyses adenosine(1518)/adenosine(1519) in 16S rRNA + 4 S-adenosyl-L-methionine = N(6)-dimethyladenosine(1518)/N(6)-dimethyladenosine(1519) in 16S rRNA + 4 S-adenosyl-L-homocysteine + 4 H(+). Its function is as follows. Specifically dimethylates two adjacent adenosines (A1518 and A1519) in the loop of a conserved hairpin near the 3'-end of 16S rRNA in the 30S particle. May play a critical role in biogenesis of 30S subunits. The protein is Ribosomal RNA small subunit methyltransferase A of Pseudomonas fluorescens (strain ATCC BAA-477 / NRRL B-23932 / Pf-5).